We begin with the raw amino-acid sequence, 347 residues long: Transcription factor EC (347 aa).

The tract at residues 1–119 (MTLDHQIINP…GLTSASCPSS (119 aa)) is necessary for transcriptional transactivation. A bHLH domain is found at 139–192 (QKKDNHNLIERRRRYNINYRIKELGTLIPKSNDPDMRWNKGTILKASVEYIKWL). The tract at residues 271–347 (PSPEFCDQAI…SFSSDDGDEL (77 aa)) is necessary for transcriptional transactivation. The disordered stretch occupies residues 319–347 (DPLLSATSPAVSKESSRRSSFSSDDGDEL). The span at 326-341 (SPAVSKESSRRSSFSS) shows a compositional bias: low complexity.

This sequence belongs to the MiT/TFE family. In terms of assembly, homodimer. Forms heterodimers with MITF and TFE3. Interacts with MITF.

It is found in the nucleus. Its function is as follows. Transcriptional regulator that acts as a repressor or an activator. Acts as a transcriptional repressor on minimal promoter containing element F (that includes an E-box sequence). Binds to element F in an E-box sequence-specific manner. Acts as a transcriptional transactivator on the proximal promoter region of the tartrate-resistant acid phosphatase (TRAP) E-box containing promoter. Collaborates with MITF in target gene activation. Acts as a transcriptional repressor on minimal promoter containing mu E3 enhancer sequence. Binds to mu E3 DNA sequence of the immunoglobulin heavy-chain gene enhancer. Binds DNA in a homo- or heterodimeric form. The chain is Transcription factor EC (TFEC) from Pan troglodytes (Chimpanzee).